The chain runs to 244 residues: uncharacterized protein (244 aa).

4 helical membrane-spanning segments follow: residues 20 to 42 (TITA…VVLI), 49 to 67 (FVYI…ATKV), 82 to 101 (TPSI…ASVF), and 108 to 125 (AFLV…ATPI).

The protein resides in the cell membrane. This is an uncharacterized protein from Archaeoglobus fulgidus (strain ATCC 49558 / DSM 4304 / JCM 9628 / NBRC 100126 / VC-16).